Consider the following 249-residue polypeptide: uncharacterized protein (249 aa).

Residues methionine 1–alanine 43 form the signal peptide. The segment at alanine 40–valine 59 is disordered. In terms of domain architecture, NodB homology spans proline 68–glycine 243.

This is an uncharacterized protein from Streptomyces coelicolor (strain ATCC BAA-471 / A3(2) / M145).